The primary structure comprises 480 residues: MSGDPKIEATAVAKTKEDTNKVDIKAMRQFVEIKGGIENEIYNPENATTYFYREVRRSVPFIKVPEIIKPNGSVNFGGQCQFNIPRCGDYLLNLTLYIEIPKIELNITETAAVPGGAAASLHRVGWVKNLAHQLVKEIKLNIDDTTVVNIDTAFLDMWSEFMTDNGKFDGYKEMIGGSKELWDLDDKVAGAGTIILPLPLFFSRDSGLALPLSSLISSDISVEVLLRKWDEVLLLEDINNSKNKVIKADDIKDGEPKLTSIKLIGTYAVASKYEVNKTRCDDRRMLIEKPFKASEYELPVFDSGKLDEPIPINMEKINGAIKALFFAVKNTSRSNEHSVYKVGLPIPGTLRIDGGSLHALSEIGINLAEHVFVPSLPIEYYSYQQPYEHAKRIPNNRDLFMYSFCLDVGDVDPMGSINPKLLAKRLTFQIKPTKDLAEATKNKQTFKFITYALCNRLVSIRQGKFTLLSQSMYGEDGEDE.

The protein resides in the virion. Its function is as follows. Major protein of the capsid. This Trichoplusia ni ascovirus 2c (TnAV-2c) protein is Major capsid protein (MCP-1).